The sequence spans 1300 residues: MGTASSLVNAGEVIEDTYGGGGGEDCVIPVEVKPKARLLRSSFRRGPRVIGASFKSTASVDLEYAAEYERLKKEYEIFRVSKNNEVASMQKKEIKLDEENKRLRAELQALQKTYQKILREKESAVEAKYQAMERAATFEHDRDKVKRQFKIFRETKEKEIQDLLRAKRDLEAKLQRLQAQGIQVFDPGESDSDDNGTEVTVPSTQCEYWTSGALGSDPSMGSMMQLQQSFRGPEFAHSSIDVEGPFANVNRDDWDAAVASLLQVTPLFSQSLWSNTVRCYLMSTAETQAEVEIFLRDYSPKLQRMCETSGYFFQMVFFPEECESQHFAVRKWEIEKSSIVILFICSSLPSCLQEDCEEAFLKNNEAKPRLIYHSIEDGRSDSDGLKQLLEQDTNKANKTKVVDHCGDPVEGAYKLYCHLEQVIKQDLLGIEISDPDAKDESATMEDDDYGDVLWDVHDEQEQMEAYQQASQSICELGFQKYYDRLNDLVAAPAPIPPLLISGGPGSGKSLLLSKWIQLQQKHSPNTLMLYHFVGRPLSSSSEPSLIIKRLTLKLMQHSWSVSSLSMDPGKFLEEFPHWLEKLSIRYQGNIIIIIDSIDHIQQSEKHMKWLIDPLPVNVRVIVSVNVETCPQAWRLWPTLHLDPLNSKDVKALINMECGGANILLTKEQERKLERHCRSATTCNALYVTLITKLLTWAGSTGKIEDVLQQCLQCQDTVSLYRLVLRSVQEVMPSAKEKEFMREILCFISVSHNGVSECELMELCPGLTWEVLTSLIYHLYTLVLLKYTCGLLQFQHLQAWDAVNLEYMQGGQNIISEYREKIIKHFTTQLSHDRVTWRSADELTWLFQQQGEKQKLHKCLMNLFVSQNLYKRGHFAELLSYWQLVGKDKISMASEYFDALKQYEKNCEGEEKMTSLADLYETLGRFLKDLGLLSQAVTPLQRSLEIRETALDPDHPSVAQSLHQLAGVYMQSKKFGNAEQLYKQALEISENAYGSEHLRVARELDALAVLYQKQNKFEQAEQLRKKSLKIRQKSARRKGSMYGFALLRRRALQLEELTLGKDTSDNARTLNELGVLYYLQNNLETAETFLKRSLEMRERVLGADHPDCAQSINNLAALYNEKKQYDKAEELYERALDIRRRALSPDHPSLAYTVKHLAVLYKRKGKLDKAVPLYELAVDIRQKSFGPKHPSVATALVNLAVLYCQMKKQDDALPLYERAMKIYEDSLGRMHPRVGETLKNLAVLRYEEGDYEKAAELYKRAMEIKETETSVLGAKAPSGHSSSGGDTYSVQNTLPVSVFPE.

Residues 82 to 183 are a coiled coil; sequence KNNEVASMQK…LQRLQAQGIQ (102 aa). 9 TPR repeats span residues 443–476, 916–949, 958–991, 1000–1033, 1066–1099, 1108–1141, 1150–1183, 1192–1225, and 1234–1267; these read TMED…ICEL, ADLY…RETA, AQSL…SENA, AREL…RQKS, ARTL…RERV, AQSI…RRRA, AYTV…RQKS, ATAL…YEDS, and GETL…KETE. Positions 1268-1288 are disordered; that stretch reads TSVLGAKAPSGHSSSGGDTYS. The span at 1278–1288 shows a compositional bias: polar residues; that stretch reads GHSSSGGDTYS.

Its subcellular location is the cell projection. The protein localises to the cilium. Functionally, required for normal ciliary development and function. Inhibits disheveled-1-induced canonical Wnt-signaling activity and may also play a role in the control of non-canonical Wnt signaling that regulates planar cell polarity. Probably acts as a molecular switch between different Wnt signaling pathways. Required for proper convergent extension cell movements. The chain is Nephrocystin-3 (nphp3) from Xenopus laevis (African clawed frog).